The sequence spans 505 residues: Histidine ammonia-lyase (505 aa).

Positions 141-143 form a cross-link, 5-imidazolinone (Ala-Gly); it reads ASG. Ser-142 carries the post-translational modification 2,3-didehydroalanine (Ser).

It belongs to the PAL/histidase family. In terms of processing, contains an active site 4-methylidene-imidazol-5-one (MIO), which is formed autocatalytically by cyclization and dehydration of residues Ala-Ser-Gly.

It is found in the cytoplasm. It catalyses the reaction L-histidine = trans-urocanate + NH4(+). The protein operates within amino-acid degradation; L-histidine degradation into L-glutamate; N-formimidoyl-L-glutamate from L-histidine: step 1/3. The polypeptide is Histidine ammonia-lyase (Bacillus cereus (strain G9842)).